A 132-amino-acid polypeptide reads, in one-letter code: Putative RNase AF_2433 (132 aa).

Catalysis depends on residues Arg90 and His95. The short motif at 90–97 (RNWLVHRY) is the RX(4)HXY motif element. Tyr97 carries the O-di-AMP-tyrosine modification.

Belongs to the HepT RNase toxin family. As to quaternary structure, homodimer, probably forms a complex with cognate antitoxin AF_2432. Post-translationally, modified by cognate antitoxin AF_2432; probably at least 2 successive AMPylation events occur on Tyr-97.

Probable toxic component of a putative type VII toxin-antitoxin (TA) system, probably an RNase. Probably neutralized by cognate antitoxin AF_2432. Neutralization may be due to AMPylation by AF_2432. The sequence is that of Putative RNase AF_2433 from Archaeoglobus fulgidus (strain ATCC 49558 / DSM 4304 / JCM 9628 / NBRC 100126 / VC-16).